A 351-amino-acid chain; its full sequence is Probable NADP-dependent isopropanol dehydrogenase (351 aa).

Cysteine 37, histidine 59, glutamate 60, and aspartate 150 together coordinate Zn(2+). NADP(+) is bound by residues 175–178 (AGPV), 198–200 (DSR), 265–267 (VNY), and lysine 340.

Belongs to the zinc-containing alcohol dehydrogenase family. It depends on Zn(2+) as a cofactor.

It catalyses the reaction propan-2-ol + NADP(+) = acetone + NADPH + H(+). Alcohol dehydrogenase with a preference for medium chain secondary alcohols, such as 2-butanol and isopropanol. Has very low activity with primary alcohols, such as ethanol. Under physiological conditions, the enzyme reduces aldehydes and 2-ketones to produce secondary alcohols. Is also active with acetaldehyde and propionaldehyde. The chain is Probable NADP-dependent isopropanol dehydrogenase (adh) from Mycoplasma pneumoniae (strain ATCC 29342 / M129 / Subtype 1) (Mycoplasmoides pneumoniae).